The chain runs to 353 residues: MSKPPDLLLRLLRGAPRQRVCTLFIIGFKFTFFVSIMIYWHVVGEPKEKGQLYNLPAEIPCPTLTPPTPPSHGPTPGNIFFLETSDRTNPNFLFMCSVESAARTHPESHVLVLMKGLPGGNASLPRHLGISLLSCFPNVQMLPLDLRELFQDTPLADWYAAVQGRWEPYLLPVLSDASRIALMWKFGGIYLDTDFIVLKNLRNLTNVLGTQSRYVLNGAFLAFERRHEFMALCMRDFVDHYNGWIWGHQGPQLLTRVFKKWCSIRSLAESRSCRGVTTLPPEAFYPIPWQDWKKYFEDINPEELPRLLSATYAVHVWNKKSQGTRFEATSRALLAQLHARYCPTTHEAMKMYL.

Residues 1 to 22 (MSKPPDLLLRLLRGAPRQRVCT) lie on the Cytoplasmic side of the membrane. A helical; Signal-anchor for type II membrane protein membrane pass occupies residues 23 to 43 (LFIIGFKFTFFVSIMIYWHVV). Over 44-353 (GEPKEKGQLY…TTHEAMKMYL (310 aa)) the chain is Lumenal. The N-linked (GlcNAc...) asparagine glycan is linked to Asn-121. The short motif at 192 to 194 (DTD) is the DXD motif element. The N-linked (GlcNAc...) asparagine glycan is linked to Asn-203.

Belongs to the glycosyltransferase 32 family.

It localises to the golgi apparatus membrane. It carries out the reaction a beta-D-Gal-(1-&gt;4)-beta-D-Glc-(1&lt;-&gt;1)-Cer(d18:1(4E)) + UDP-alpha-D-galactose = a globoside Gb3Cer (d18:1(4E)) + UDP + H(+). It catalyses the reaction a beta-D-Gal-(1&lt;-&gt;1')-ceramide + UDP-alpha-D-galactose = alpha-D-Gal-(1-&gt;4)-beta-D-Gal-(1&lt;-&gt;1')-Cer + UDP + H(+). Its pathway is glycolipid biosynthesis. In terms of biological role, catalyzes the transfer of galactose from UDP-alpha-D-galactose to lactosylceramide/beta-D-galactosyl-(1-&gt;4)-beta-D-glucosyl-(1&lt;-&gt;1)-ceramide(d18:1(4E)) to produce globotriaosylceramide/globoside Gb3Cer (d18:1(4E)). Also able to transfer galactose to galactosylceramide/beta-D-Gal-(1&lt;-&gt;1')-Cer. Globoside Gb3Cer is a glycosphingolipid of the globo serie, one of the major types of neutral root structures of glycosphingolipids, that constitute a significant portion of mammalian cell membranes. The protein is Lactosylceramide 4-alpha-galactosyltransferase (A4GALT) of Pan troglodytes (Chimpanzee).